Reading from the N-terminus, the 150-residue chain is FAD synthase (150 aa).

ATP-binding positions include 11–12 (TF), 16–19 (HPGH), D96, and Y124.

The protein belongs to the archaeal FAD synthase family. As to quaternary structure, homodimer. A divalent metal cation is required as a cofactor.

It catalyses the reaction FMN + ATP + H(+) = FAD + diphosphate. The protein operates within cofactor biosynthesis; FAD biosynthesis; FAD from FMN: step 1/1. Functionally, catalyzes the transfer of the AMP portion of ATP to flavin mononucleotide (FMN) to produce flavin adenine dinucleotide (FAD) coenzyme. In Methanococcus maripaludis (strain C7 / ATCC BAA-1331), this protein is FAD synthase.